A 493-amino-acid polypeptide reads, in one-letter code: Adenylyltransferase and sulfurtransferase uba4 (493 aa).

ATP contacts are provided by residues glycine 99, aspartate 120, 127–131 (SNLHR), lysine 144, and 188–189 (DN). Residues cysteine 237 and cysteine 240 each contribute to the Zn(2+) site. The active-site Glycyl thioester intermediate; for adenylyltransferase activity is the cysteine 254. Residues cysteine 316 and cysteine 319 each contribute to the Zn(2+) site. The region spanning 376–491 (INKEPTIIDV…WREQIDPDWP (116 aa)) is the Rhodanese domain. Residue cysteine 446 is the Cysteine persulfide intermediate; for sulfurtransferase activity of the active site.

This sequence in the N-terminal section; belongs to the HesA/MoeB/ThiF family. UBA4 subfamily. Zn(2+) is required as a cofactor.

The protein localises to the cytoplasm. It is found in the cytosol. The catalysed reaction is [molybdopterin-synthase sulfur-carrier protein]-C-terminal Gly-Gly + ATP + H(+) = [molybdopterin-synthase sulfur-carrier protein]-C-terminal Gly-Gly-AMP + diphosphate. The enzyme catalyses [molybdopterin-synthase sulfur-carrier protein]-C-terminal Gly-Gly-AMP + S-sulfanyl-L-cysteinyl-[cysteine desulfurase] + AH2 = [molybdopterin-synthase sulfur-carrier protein]-C-terminal-Gly-aminoethanethioate + L-cysteinyl-[cysteine desulfurase] + A + AMP + 2 H(+). The protein operates within tRNA modification; 5-methoxycarbonylmethyl-2-thiouridine-tRNA biosynthesis. Its pathway is cofactor biosynthesis; molybdopterin biosynthesis. In terms of biological role, plays a central role in 2-thiolation of mcm(5)S(2)U at tRNA wobble positions of cytosolic tRNA(Lys), tRNA(Glu) and tRNA(Gln). Also essential during biosynthesis of the molybdenum cofactor. Acts by mediating the C-terminal thiocarboxylation of sulfur carriers urm1 and mocs2a. Its N-terminus first activates urm1 and mocs2a as acyl-adenylates (-COAMP), then the persulfide sulfur on the catalytic cysteine is transferred to urm1 and mocs2a to form thiocarboxylation (-COSH) of their C-terminus. The reaction probably involves hydrogen sulfide that is generated from the persulfide intermediate and that acts as a nucleophile towards urm1 and mocs2a. Subsequently, a transient disulfide bond is formed. Does not use thiosulfate as sulfur donor; nfs1 probably acting as a sulfur donor for thiocarboxylation reactions. In Aspergillus fumigatus (strain CBS 144.89 / FGSC A1163 / CEA10) (Neosartorya fumigata), this protein is Adenylyltransferase and sulfurtransferase uba4.